The primary structure comprises 36 residues: Photosystem II reaction center protein X (36 aa).

A helical transmembrane segment spans residues 9 to 29; sequence LWSIFWGGVVVALGAAALTAI.

The protein belongs to the PsbX family. Type 1 subfamily. In terms of assembly, PSII is composed of 1 copy each of membrane proteins PsbA, PsbB, PsbC, PsbD, PsbE, PsbF, PsbH, PsbI, PsbJ, PsbK, PsbL, PsbM, PsbT, PsbX, Psb30/Ycf12, peripheral proteins PsbO, CyanoQ (PsbQ), PsbU, PsbV and a large number of cofactors. It forms dimeric complexes.

Its subcellular location is the cell inner membrane. In terms of biological role, involved in the binding and/or turnover of quinones at the Q(B) site of photosystem II (PSII). PSII is a light-driven water plastoquinone oxidoreductase, using light energy to abstract electrons from H(2)O, generating a proton gradient subsequently used for ATP formation. The sequence is that of Photosystem II reaction center protein X from Gloeobacter violaceus (strain ATCC 29082 / PCC 7421).